The primary structure comprises 681 residues: Transketolase 2 (681 aa).

H30 is a substrate binding site. Residues H69 and G116–L118 each bind thiamine diphosphate. Residue D157 coordinates Mg(2+). The thiamine diphosphate site is built by G158 and N187. Residues N187 and I189 each contribute to the Mg(2+) site. Substrate-binding residues include H263, R359, and S386. H263 is a thiamine diphosphate binding site. Residues E418 and F445 each coordinate thiamine diphosphate. Catalysis depends on E418, which acts as the Proton donor. The substrate site is built by H469, D477, and R528.

It belongs to the transketolase family. In terms of assembly, homodimer. The cofactor is Mg(2+). Ca(2+) serves as cofactor. Mn(2+) is required as a cofactor. Requires Co(2+) as cofactor. It depends on thiamine diphosphate as a cofactor.

It carries out the reaction D-sedoheptulose 7-phosphate + D-glyceraldehyde 3-phosphate = aldehydo-D-ribose 5-phosphate + D-xylulose 5-phosphate. Catalyzes the transfer of a two-carbon ketol group from a ketose donor to an aldose acceptor, via a covalent intermediate with the cofactor thiamine pyrophosphate. The sequence is that of Transketolase 2 (TKL2) from Saccharomyces cerevisiae (strain ATCC 204508 / S288c) (Baker's yeast).